The chain runs to 590 residues: Aspartate--tRNA(Asp/Asn) ligase (590 aa).

Position 175 (E175) interacts with L-aspartate. An aspartate region spans residues 199-202; that stretch reads QQFK. L-aspartate-binding residues include R221 and H452. 221 to 223 contributes to the ATP binding site; it reads RDE. An ATP-binding site is contributed by E485. Residue R492 coordinates L-aspartate. 537–540 serves as a coordination point for ATP; sequence GIDR.

This sequence belongs to the class-II aminoacyl-tRNA synthetase family. Type 1 subfamily. Homodimer.

It is found in the cytoplasm. It catalyses the reaction tRNA(Asx) + L-aspartate + ATP = L-aspartyl-tRNA(Asx) + AMP + diphosphate. Functionally, aspartyl-tRNA synthetase with relaxed tRNA specificity since it is able to aspartylate not only its cognate tRNA(Asp) but also tRNA(Asn). Reaction proceeds in two steps: L-aspartate is first activated by ATP to form Asp-AMP and then transferred to the acceptor end of tRNA(Asp/Asn). The chain is Aspartate--tRNA(Asp/Asn) ligase from Dinoroseobacter shibae (strain DSM 16493 / NCIMB 14021 / DFL 12).